The following is a 995-amino-acid chain: UPF0182 protein MMAR_1371 (995 aa).

7 helical membrane-spanning segments follow: residues 18 to 38 (VLILIALGVIALLLAGPRLID), 63 to 83 (FLVFLVAGVLVGGIVFAGLAL), 113 to 133 (LFGIGIPAAIGLLAGIVAQSY), 175 to 195 (FVAIFLAFVANVVSHYLFGGI), 210 to 230 (IQLVSLVGVLVLLKAVAYWLD), 259 to 279 (KLILMAIAVICAAAVFSAIVL), and 287 to 307 (IGLVLLLLSSLIVGAAWPMIV). A disordered region spans residues 900 to 948 (AATGIQPTEGGAPANVPPNNAPSPEALPGTPPSPPTAVPPAPEASVTLS). Pro residues predominate over residues 928–941 (GTPPSPPTAVPPAP).

It belongs to the UPF0182 family.

Its subcellular location is the cell membrane. The polypeptide is UPF0182 protein MMAR_1371 (Mycobacterium marinum (strain ATCC BAA-535 / M)).